A 448-amino-acid polypeptide reads, in one-letter code: Fibulin-5 (448 aa).

A signal peptide spans 1-23 (MPGIKRILTVTILALCLPSPGNA). Residues 42-82 (DIDECRTIPEACRGDMMCVNQNGGYLCIPRTNPVYRGPYSN) form the EGF-like 1; calcium-binding domain. 17 disulfide bridges follow: Cys46–Cys59, Cys53–Cys68, Cys131–Cys144, Cys138–Cys153, Cys155–Cys166, Cys172–Cys181, Cys177–Cys190, Cys192–Cys205, Cys211–Cys221, Cys217–Cys230, Cys232–Cys245, Cys251–Cys262, Cys258–Cys271, Cys273–Cys286, Cys292–Cys305, Cys299–Cys314, and Cys320–Cys332. The Cell attachment site signature appears at 54-56 (RGD). In terms of domain architecture, EGF-like 2; calcium-binding spans 127-167 (DVDECATDSHQCNPTQICINTEGGYTCSCTDGYWLLEGQCL). The EGF-like 3; calcium-binding domain occupies 168 to 206 (DIDECRYGYCQQLCANVPGSYSCTCNPGFTLNEDGRSCQ). In terms of domain architecture, EGF-like 4; calcium-binding spans 207–246 (DVNECATENPCVQTCVNTYGSFICRCDPGYELEEDGVHCS). The tract at residues 245-448 (CSDMDECSFS…LRIYVSQYPF (204 aa)) is interaction with LOXL1. In terms of domain architecture, EGF-like 5; calcium-binding spans 247 to 287 (DMDECSFSEFLCQHECVNQPGTYFCSCPPGYILLDDNRSCQ). N-linked (GlcNAc...) asparagine glycans are attached at residues Asn283 and Asn296. Positions 288-333 (DINECEHRNHTCNLQQTCYNLQGGFKCIDPIRCEEPYLRISDNRCM) constitute an EGF-like 6; calcium-binding domain.

Belongs to the fibulin family. In terms of assembly, homodimer. Monomer, homodimerizes in presence of Ca(2+). Interacts with ELN. Interacts (via N-terminus) with the integrins ITGAV/ITGB3, ITGAV/ITGB5 and ITGA9/ITGB1. Interacts with FBN1 (via N-terminal domain). Forms a ternary complex with ELN and FBN1. Interacts with EFEMP2 with moderate affinity. Interacts with LOXL1. Post-translationally, N-glycosylated. In terms of tissue distribution, expressed in skin fibroblasts (at protein level). Expressed predominantly in heart, ovary, and colon but also in kidney, pancreas, testis, lung and placenta. Not detectable in brain, liver, thymus, prostate, or peripheral blood leukocytes.

The protein localises to the secreted. Its subcellular location is the extracellular space. It is found in the extracellular matrix. Essential for elastic fiber formation, is involved in the assembly of continuous elastin (ELN) polymer and promotes the interaction of microfibrils and ELN. Stabilizes and organizes elastic fibers in the skin, lung and vasculature. Promotes adhesion of endothelial cells through interaction of integrins and the RGD motif. Vascular ligand for integrin receptors which may play a role in vascular development and remodeling. May act as an adapter that mediates the interaction between FBN1 and ELN. The sequence is that of Fibulin-5 (FBLN5) from Homo sapiens (Human).